The primary structure comprises 579 residues: Carboxysome shell carbonic anhydrase (579 aa).

Residues 72–95 (GGGRVRSARDQRQPGWVRRDKGAT) are disordered. Over residues 78–93 (SARDQRQPGWVRRDKG) the composition is skewed to basic and acidic residues. Cysteine 240 provides a ligand contact to Zn(2+). Aspartate 242 acts as the Proton acceptor in catalysis. Histidine 308 and cysteine 319 together coordinate Zn(2+).

Belongs to the beta-class carbonic anhydrase family. CsoSCA subfamily. In terms of assembly, homodimer. Zn(2+) serves as cofactor.

The protein resides in the carboxysome. It catalyses the reaction hydrogencarbonate + H(+) = CO2 + H2O. With respect to regulation, inhibited by dithiothreitol, partially inhibited by acetatzolamide and cyanide. Its function is as follows. Reversible hydration of carbon dioxide. Essential for photosynthetic carbon dioxide fixation, supplies CO(2) to RuBisCO (ribulose bisphosphate carboxylase, cbbL-cbbS) in the carboxysome. This chain is Carboxysome shell carbonic anhydrase, found in Parasynechococcus marenigrum (strain WH8102).